An 862-amino-acid chain; its full sequence is Linoleate 9S-lipoxygenase 1 (862 aa).

The PLAT domain maps to 34–161 (NDFGATIIDG…NYRYSRVFFA (128 aa)). The Lipoxygenase domain occupies 164 to 862 (TYLPSQMPAA…AKGIPNSISI (699 aa)). The disordered stretch occupies residues 212–241 (GRPILGGNSDHPYPRRGRTERKPNASDPSL). Fe cation is bound by residues His517, His522, His708, Asn712, and Ile862.

The protein belongs to the lipoxygenase family. In terms of assembly, monomer. The cofactor is Fe cation.

The enzyme catalyses (9Z,12Z)-octadecadienoate + O2 = (9S)-hydroperoxy-(10E,12Z)-octadecadienoate. It participates in lipid metabolism; oxylipin biosynthesis. Its function is as follows. Plant lipoxygenase may be involved in a number of diverse aspects of plant physiology including growth and development, pest resistance, and senescence or responses to wounding. It catalyzes the hydroperoxidation of lipids containing a cis,cis-1,4-pentadiene structure. The polypeptide is Linoleate 9S-lipoxygenase 1 (LOX1.1) (Hordeum vulgare (Barley)).